We begin with the raw amino-acid sequence, 509 residues long: Proto-oncogene tyrosine-protein kinase LCK (509 aa).

The N-myristoyl glycine moiety is linked to residue G2. Residues 2 to 72 (GCVCSSNPED…DNLVIALHSY (71 aa)) form an interactions with CD4 and CD8 region. Residues C3 and C5 are each lipidated (S-palmitoyl cysteine). The SH3 domain occupies 61 to 121 (LQDNLVIALH…PFNFVAKANS (61 aa)). A Glycyl lysine isopeptide (Lys-Gly) (interchain with G-Cter in ubiquitin) cross-link involves residue K99. The residue at position 102 (S102) is a Phosphoserine. The region spanning 127–224 (WFFKNLSRKD…GLCTKLSRPC (98 aa)) is the SH2 domain. Residues 154-242 (RESESTAGSF…WWEDEWEVPR (89 aa)) form an interaction with PTPRH region. T159 is modified (phosphothreonine). S162 is subject to Phosphoserine. Position 192 is a phosphotyrosine (Y192). S194 bears the Phosphoserine mark. The Protein kinase domain occupies 245-498 (LKLVERLGAG…YLRSVLDDFF (254 aa)). ATP is bound by residues 251 to 259 (LGAGQFGEV) and K273. K276 participates in a covalent cross-link: Glycyl lysine isopeptide (Lys-Gly) (interchain with G-Cter in ubiquitin). Residue D364 is the Proton acceptor of the active site. A Phosphotyrosine; by autocatalysis modification is found at Y394. Phosphotyrosine is present on Y505.

Belongs to the protein kinase superfamily. Tyr protein kinase family. SRC subfamily. In terms of assembly, binds to the cytoplasmic domain of cell surface receptors, such as AXL, CD2, CD4, CD5, CD8, CD44, CD45 and CD122. Also binds to effector molecules, such as PI4K, VAV1, RASA1, FYB1 and to other protein kinases including CDK1, RAF1, ZAP70 and SYK. Binds to phosphatidylinositol 3'-kinase (PI3K) from T-lymphocytes through its SH3 domain and to the tyrosine phosphorylated form of KHDRBS1/p70 through its SH2 domain. Interacts with SQSTM1. Interacts with phosphorylated LIME1. Interacts with CBLB and PTPRH. Interacts with RUNX3. Forms a signaling complex with EPHA1, PTK2B and PI3-KINASE; upon activation by EFNA1 which may regulate T-lymphocytes migration. Associates with ZAP70 and RHOH; these interactions allow LCK-mediated RHOH and CD3 subunit phosphorylations in presence of a functional ZAP70. Interacts with CEACAM1 (via cytoplasmic domain); mediates CEACAM1 phosphorylation resulting in PTPN6 recruitment that dephosphorylates TCR stimulation-induced CD247 and ZAP70. Interacts with FYB2. Interacts with CD160. Interacts with CD48. Post-translationally, autophosphorylated on Tyr-394, increasing enzymatic activity, this site is dephosphorylated by PTN22. Phosphorylated on Tyr-505 by CSK, decreasing activity. Dephosphorylated by PTPRC/CD45. Dephosphorylation at Tyr-394 by PTPN2 negatively regulates T-cells differentiation. Dephosphorylation at Tyr-394 by DUSP22 negatively regulates T-cell receptor signaling. In terms of processing, myristoylation is required prior to palmitoylation. Palmitoylation regulates association with the plasma membrane and could be mediated by ZDHHC2. Post-translationally, 'Lys-63'-linked ubiquitinated at Lys-99 and Lys-276 by UBR2; this modification is required for autophosphorylation at Tyr-394.

The protein resides in the cell membrane. The protein localises to the cytoplasm. Its subcellular location is the cytosol. The catalysed reaction is L-tyrosyl-[protein] + ATP = O-phospho-L-tyrosyl-[protein] + ADP + H(+). With respect to regulation, the relative activities of the inhibitory tyrosine-protein kinase CSK and the activating tyrosine-protein phosphatase PTPRC/CD45 determine the level of LCK activity. These interactions allow rapid and efficient activation of LCK in response to TCR stimulation. Non-receptor tyrosine-protein kinase that plays an essential role in the selection and maturation of developing T-cells in the thymus and in the function of mature T-cells. Plays a key role in T-cell antigen receptor (TCR)-linked signal transduction pathways. Constitutively associated with the cytoplasmic portions of the CD4 and CD8 surface receptors. Association of the TCR with a peptide antigen-bound MHC complex facilitates the interaction of CD4 and CD8 with MHC class II and class I molecules, respectively, thereby recruiting the associated LCK protein to the vicinity of the TCR/CD3 complex. LCK then phosphorylates tyrosine residues within the immunoreceptor tyrosine-based activation motifs (ITAM) of the cytoplasmic tails of the TCR-gamma chains and CD3 subunits, initiating the TCR/CD3 signaling pathway. Once stimulated, the TCR recruits the tyrosine kinase ZAP70, that becomes phosphorylated and activated by LCK. Following this, a large number of signaling molecules are recruited, ultimately leading to lymphokine production. LCK also contributes to signaling by other receptor molecules. Associates directly with the cytoplasmic tail of CD2, which leads to hyperphosphorylation and activation of LCK. Also plays a role in the IL2 receptor-linked signaling pathway that controls the T-cell proliferative response. Binding of IL2 to its receptor results in increased activity of LCK. Is expressed at all stages of thymocyte development and is required for the regulation of maturation events that are governed by both pre-TCR and mature alpha beta TCR. Phosphorylates other substrates including RUNX3, PTK2B/PYK2, the microtubule-associated protein MAPT, RHOH or TYROBP. Interacts with UNC119; this interaction plays a crucial role in activation of LCK. This chain is Proto-oncogene tyrosine-protein kinase LCK (Lck), found in Rattus norvegicus (Rat).